The chain runs to 129 residues: Ferredoxin-1 (129 aa).

The 92-residue stretch at 29 to 120 (SDMDLDDEDY…EVKIVYNAKH (92 aa)) folds into the 2Fe-2S ferredoxin-type domain. Positions 64, 69, 72, and 103 each coordinate [2Fe-2S] cluster.

Belongs to the 2Fe2S plant-type ferredoxin family. It depends on [2Fe-2S] cluster as a cofactor.

Ferredoxins are iron-sulfur proteins that transfer electrons in a wide variety of metabolic reactions. This is Ferredoxin-1 (fer1) from Haloarcula marismortui (strain ATCC 43049 / DSM 3752 / JCM 8966 / VKM B-1809) (Halobacterium marismortui).